The chain runs to 110 residues: Large ribosomal subunit protein uL22 (110 aa).

Belongs to the universal ribosomal protein uL22 family. In terms of assembly, part of the 50S ribosomal subunit.

This protein binds specifically to 23S rRNA; its binding is stimulated by other ribosomal proteins, e.g. L4, L17, and L20. It is important during the early stages of 50S assembly. It makes multiple contacts with different domains of the 23S rRNA in the assembled 50S subunit and ribosome. In terms of biological role, the globular domain of the protein is located near the polypeptide exit tunnel on the outside of the subunit, while an extended beta-hairpin is found that lines the wall of the exit tunnel in the center of the 70S ribosome. In Ruthia magnifica subsp. Calyptogena magnifica, this protein is Large ribosomal subunit protein uL22.